Consider the following 302-residue polypeptide: MDQIRLTHLRQLEAESIHIIREVAAEFSNPVMLYSIGKDSSVMLHLARKAFYPGTLPFPLLHVDTGWKFREMYEFRDRTAKAYGCELLVHKNPEGVAMGINPFVHGSAKHTDIMKTEGLKQALNKYGFDAAFGGARRDEEKSRAKERIYSFRDRFHRWDPKNQRPELWHNYNGQINKGESIRVFPLSNWTEQDIWQYIWLENIDIVPLYLAAERPVLERDGMLMMIDDNRIDLQPGEVIKKRMVRFRTLGCWPLTGAVESNAQTLPEIIEEMLVSTTSERQGRVIDRDQAGSMELKKRQGYF.

It belongs to the PAPS reductase family. CysD subfamily. In terms of assembly, heterodimer composed of CysD, the smaller subunit, and CysN.

The enzyme catalyses sulfate + ATP + H(+) = adenosine 5'-phosphosulfate + diphosphate. The protein operates within sulfur metabolism; hydrogen sulfide biosynthesis; sulfite from sulfate: step 1/3. Its function is as follows. With CysN forms the ATP sulfurylase (ATPS) that catalyzes the adenylation of sulfate producing adenosine 5'-phosphosulfate (APS) and diphosphate, the first enzymatic step in sulfur assimilation pathway. APS synthesis involves the formation of a high-energy phosphoric-sulfuric acid anhydride bond driven by GTP hydrolysis by CysN coupled to ATP hydrolysis by CysD. In Escherichia coli O7:K1 (strain IAI39 / ExPEC), this protein is Sulfate adenylyltransferase subunit 2.